The primary structure comprises 360 residues: Iron uptake protein A1 (360 aa).

An N-terminal signal peptide occupies residues 1–28 (MVQKLSRRLFLSIGTAFTVVVGSQLLSS). A lipid anchor (N-palmitoyl cysteine) is attached at cysteine 29. A lipid anchor (S-diacylglycerol cysteine) is attached at cysteine 29. 5 residues coordinate Fe cation: histidine 54, tyrosine 55, tyrosine 185, tyrosine 241, and tyrosine 242.

This sequence belongs to the bacterial solute-binding protein 1 family.

The protein resides in the cellular thylakoid membrane. Its subcellular location is the cell membrane. Plays an important role in protecting the acceptor side of photosystem II (PSII) against oxidative damage, especially under iron-limiting growth conditions. The differing subcellular locations of futA1 (predominantly thylakoid lumen) and futA2 (predominantly periplasmic) suggest they may fulfill different roles. Its function is as follows. A major iron-binding protein involved in Fe(3+) uptake, probably part of a periplasmic ABC transporter complex futA1A2BC (TC 3.A.1.10.2) involved in Fe(3+) ion import (ferric iron). This protein and futA2 (slr0531) may be subunit proteins that have redundant or overlapping substrate-binding functions. The chain is Iron uptake protein A1 (futA1) from Synechocystis sp. (strain ATCC 27184 / PCC 6803 / Kazusa).